Reading from the N-terminus, the 418-residue chain is Serine hydroxymethyltransferase (418 aa).

(6S)-5,6,7,8-tetrahydrofolate contacts are provided by residues L120 and 124 to 126 (GHL). N6-(pyridoxal phosphate)lysine is present on K229. 353–355 (SPF) contacts (6S)-5,6,7,8-tetrahydrofolate.

This sequence belongs to the SHMT family. As to quaternary structure, homodimer. Pyridoxal 5'-phosphate serves as cofactor.

Its subcellular location is the cytoplasm. The catalysed reaction is (6R)-5,10-methylene-5,6,7,8-tetrahydrofolate + glycine + H2O = (6S)-5,6,7,8-tetrahydrofolate + L-serine. Its pathway is one-carbon metabolism; tetrahydrofolate interconversion. The protein operates within amino-acid biosynthesis; glycine biosynthesis; glycine from L-serine: step 1/1. Catalyzes the reversible interconversion of serine and glycine with tetrahydrofolate (THF) serving as the one-carbon carrier. This reaction serves as the major source of one-carbon groups required for the biosynthesis of purines, thymidylate, methionine, and other important biomolecules. Also exhibits THF-independent aldolase activity toward beta-hydroxyamino acids, producing glycine and aldehydes, via a retro-aldol mechanism. The protein is Serine hydroxymethyltransferase of Psychrobacter sp. (strain PRwf-1).